Consider the following 344-residue polypeptide: N-acetyl-gamma-glutamyl-phosphate reductase (344 aa).

Cys149 is an active-site residue.

Belongs to the NAGSA dehydrogenase family. Type 1 subfamily.

Its subcellular location is the cytoplasm. It carries out the reaction N-acetyl-L-glutamate 5-semialdehyde + phosphate + NADP(+) = N-acetyl-L-glutamyl 5-phosphate + NADPH + H(+). Its pathway is amino-acid biosynthesis; L-arginine biosynthesis; N(2)-acetyl-L-ornithine from L-glutamate: step 3/4. In terms of biological role, catalyzes the NADPH-dependent reduction of N-acetyl-5-glutamyl phosphate to yield N-acetyl-L-glutamate 5-semialdehyde. This Acidithiobacillus ferrooxidans (strain ATCC 23270 / DSM 14882 / CIP 104768 / NCIMB 8455) (Ferrobacillus ferrooxidans (strain ATCC 23270)) protein is N-acetyl-gamma-glutamyl-phosphate reductase.